The sequence spans 197 residues: Imidazoleglycerol-phosphate dehydratase (197 aa).

This sequence belongs to the imidazoleglycerol-phosphate dehydratase family.

It is found in the cytoplasm. It catalyses the reaction D-erythro-1-(imidazol-4-yl)glycerol 3-phosphate = 3-(imidazol-4-yl)-2-oxopropyl phosphate + H2O. Its pathway is amino-acid biosynthesis; L-histidine biosynthesis; L-histidine from 5-phospho-alpha-D-ribose 1-diphosphate: step 6/9. This is Imidazoleglycerol-phosphate dehydratase from Streptomyces avermitilis (strain ATCC 31267 / DSM 46492 / JCM 5070 / NBRC 14893 / NCIMB 12804 / NRRL 8165 / MA-4680).